Consider the following 415-residue polypeptide: Serine hydroxymethyltransferase 1 (415 aa).

(6S)-5,6,7,8-tetrahydrofolate-binding positions include L117 and 121–123; that span reads GHL. K225 carries the N6-(pyridoxal phosphate)lysine modification. 349 to 351 contacts (6S)-5,6,7,8-tetrahydrofolate; it reads SPF.

This sequence belongs to the SHMT family. In terms of assembly, homodimer. Pyridoxal 5'-phosphate serves as cofactor.

It localises to the cytoplasm. It catalyses the reaction (6R)-5,10-methylene-5,6,7,8-tetrahydrofolate + glycine + H2O = (6S)-5,6,7,8-tetrahydrofolate + L-serine. It participates in one-carbon metabolism; tetrahydrofolate interconversion. The protein operates within amino-acid biosynthesis; glycine biosynthesis; glycine from L-serine: step 1/1. Catalyzes the reversible interconversion of serine and glycine with tetrahydrofolate (THF) serving as the one-carbon carrier. This reaction serves as the major source of one-carbon groups required for the biosynthesis of purines, thymidylate, methionine, and other important biomolecules. Also exhibits THF-independent aldolase activity toward beta-hydroxyamino acids, producing glycine and aldehydes, via a retro-aldol mechanism. The sequence is that of Serine hydroxymethyltransferase 1 from Sulfurimonas denitrificans (strain ATCC 33889 / DSM 1251) (Thiomicrospira denitrificans (strain ATCC 33889 / DSM 1251)).